A 498-amino-acid polypeptide reads, in one-letter code: Protein spinster homolog 3 (498 aa).

Helical transmembrane passes span 49 to 71 (IAVA…IAGV), 87 to 107 (GLLQ…FGYL), 114 to 134 (KLIM…SSFV), 148 to 168 (LVGT…GDLF), 175 to 195 (LMIS…YIIG), 207 to 227 (WALR…VFLI), 260 to 280 (FVWS…LAFW), 309 to 329 (YIFG…GTCI), 343 to 363 (LICA…IVLA), 373 to 393 (FIAI…DILL), 407 to 427 (LQIM…IGAI), and 451 to 471 (LLCP…SLYI).

This sequence belongs to the major facilitator superfamily. Spinster (TC 2.A.1.49) family.

It is found in the membrane. In terms of biological role, sphingolipid transporter. This chain is Protein spinster homolog 3 (spns3), found in Danio rerio (Zebrafish).